Consider the following 441-residue polypeptide: Ribosomal protein uS12 methylthiotransferase RimO (441 aa).

Positions 8-118 (PKIGFVSLGC…VLEHVHHYVP (111 aa)) constitute an MTTase N-terminal domain. [4Fe-4S] cluster-binding residues include Cys17, Cys53, Cys82, Cys150, Cys154, and Cys157. The Radical SAM core domain occupies 136 to 373 (LTPRHYAYLK…MQLQQQISAE (238 aa)). Positions 376–441 (QEKVGREILV…DEYDLWGSRV (66 aa)) constitute a TRAM domain.

Belongs to the methylthiotransferase family. RimO subfamily. Requires [4Fe-4S] cluster as cofactor.

The protein resides in the cytoplasm. It catalyses the reaction L-aspartate(89)-[ribosomal protein uS12]-hydrogen + (sulfur carrier)-SH + AH2 + 2 S-adenosyl-L-methionine = 3-methylsulfanyl-L-aspartate(89)-[ribosomal protein uS12]-hydrogen + (sulfur carrier)-H + 5'-deoxyadenosine + L-methionine + A + S-adenosyl-L-homocysteine + 2 H(+). Functionally, catalyzes the methylthiolation of an aspartic acid residue of ribosomal protein uS12. This chain is Ribosomal protein uS12 methylthiotransferase RimO, found in Escherichia coli (strain SMS-3-5 / SECEC).